The chain runs to 165 residues: Growth arrest and DNA damage-inducible protein GADD45 alpha (165 aa).

Thr-2 bears the Phosphothreonine mark.

This sequence belongs to the GADD45 family. In terms of assembly, interacts with AURKA, PCNA, GADD45GIP1 and MAPK14.

Its subcellular location is the nucleus. In terms of biological role, might affect PCNA interaction with some CDK (cell division protein kinase) complexes; stimulates DNA excision repair in vitro and inhibits entry of cells into S phase. In T-cells, functions as a regulator of p38 MAPKs by inhibiting p88 phosphorylation and activity. The polypeptide is Growth arrest and DNA damage-inducible protein GADD45 alpha (Gadd45a) (Rattus norvegicus (Rat)).